Consider the following 346-residue polypeptide: Phosphoribosylformylglycinamidine cyclo-ligase (346 aa).

This sequence belongs to the AIR synthase family.

The protein localises to the cytoplasm. The catalysed reaction is 2-formamido-N(1)-(5-O-phospho-beta-D-ribosyl)acetamidine + ATP = 5-amino-1-(5-phospho-beta-D-ribosyl)imidazole + ADP + phosphate + H(+). Its pathway is purine metabolism; IMP biosynthesis via de novo pathway; 5-amino-1-(5-phospho-D-ribosyl)imidazole from N(2)-formyl-N(1)-(5-phospho-D-ribosyl)glycinamide: step 2/2. The chain is Phosphoribosylformylglycinamidine cyclo-ligase from Synechococcus sp. (strain CC9311).